A 267-amino-acid polypeptide reads, in one-letter code: 4-hydroxy-tetrahydrodipicolinate reductase (267 aa).

NAD(+) is bound by residues 8–13 (GAGGRM) and glutamate 34. NADP(+) is bound at residue arginine 35. Residues 98–100 (GTT) and 122–125 (APNM) each bind NAD(+). Catalysis depends on histidine 155, which acts as the Proton donor/acceptor. Residue histidine 156 participates in (S)-2,3,4,5-tetrahydrodipicolinate binding. Lysine 159 (proton donor) is an active-site residue. 165 to 166 (GT) serves as a coordination point for (S)-2,3,4,5-tetrahydrodipicolinate.

Belongs to the DapB family.

Its subcellular location is the cytoplasm. It carries out the reaction (S)-2,3,4,5-tetrahydrodipicolinate + NAD(+) + H2O = (2S,4S)-4-hydroxy-2,3,4,5-tetrahydrodipicolinate + NADH + H(+). It catalyses the reaction (S)-2,3,4,5-tetrahydrodipicolinate + NADP(+) + H2O = (2S,4S)-4-hydroxy-2,3,4,5-tetrahydrodipicolinate + NADPH + H(+). Its pathway is amino-acid biosynthesis; L-lysine biosynthesis via DAP pathway; (S)-tetrahydrodipicolinate from L-aspartate: step 4/4. In terms of biological role, catalyzes the conversion of 4-hydroxy-tetrahydrodipicolinate (HTPA) to tetrahydrodipicolinate. The polypeptide is 4-hydroxy-tetrahydrodipicolinate reductase (Thioalkalivibrio sulfidiphilus (strain HL-EbGR7)).